We begin with the raw amino-acid sequence, 326 residues long: Sucrose operon repressor (326 aa).

The 57-residue stretch at 1–57 (MKPKLNDVAKLAGVSATTVSRVINNHGYLSSQTKEKVFAAMRELHYQPNNMARSLQG) folds into the HTH lacI-type domain. The segment at residues 5–24 (LNDVAKLAGVSATTVSRVIN) is a DNA-binding region (H-T-H motif).

Functionally, negative regulator of scrB expression. This chain is Sucrose operon repressor (scrR), found in Pediococcus pentosaceus.